Consider the following 546-residue polypeptide: Chaperonin GroEL (546 aa).

ATP contacts are provided by residues 30-33, Lys-51, 87-91, Gly-415, 479-481, and Asp-495; these read TLGP, DGTTT, and NAA.

It belongs to the chaperonin (HSP60) family. As to quaternary structure, forms a cylinder of 14 subunits composed of two heptameric rings stacked back-to-back. Interacts with the co-chaperonin GroES.

It is found in the cytoplasm. The catalysed reaction is ATP + H2O + a folded polypeptide = ADP + phosphate + an unfolded polypeptide.. In terms of biological role, together with its co-chaperonin GroES, plays an essential role in assisting protein folding. The GroEL-GroES system forms a nano-cage that allows encapsulation of the non-native substrate proteins and provides a physical environment optimized to promote and accelerate protein folding. This chain is Chaperonin GroEL, found in Xanthomonas axonopodis pv. citri (strain 306).